Reading from the N-terminus, the 956-residue chain is Endogenous retrovirus group K member 6 Pol protein (956 aa).

A Reverse transcriptase domain is found at 57–245 (LEKGHIEPSF…TPFHYLGMQI (189 aa)). The short motif at 161 to 164 (LPQG) is the LPQG element. The short motif at 195–198 (CIDD) is the YXDD element. The RNase H type-1 domain maps to 460 to 590 (LENALTVFTD…ADLLVSSALI (131 aa)). The Mg(2+) site is built by Asp-469, Glu-497, Asp-517, and Asp-582. The segment at 587–628 (SALIKAQELHALTHVNAAGLKNKFDVTWKQAKDIVQHCTQCQ) adopts an Integrase-type zinc-finger fold. Residues His-596, His-600, Cys-624, and Cys-627 each coordinate Zn(2+). An Integrase catalytic domain is found at 642 to 803 (RGLCPNALWQ…TSAEQHLTGK (162 aa)). Positions 811–859 (KLIWWKDNKNKTWEIGKVITWGRGFACVSPGENQLPVWIPTRHLKFYNE) form a DNA-binding region, integrase-type. Residues 865–890 (KKSTSAETETSQSSTVDSQDEQNGDV) form a disordered region. A compositionally biased stretch (low complexity) spans 869–879 (SAETETSQSST).

This sequence belongs to the beta type-B retroviral polymerase family. HERV class-II K(HML-2) pol subfamily. In terms of processing, cleavage sites that yield the mature proteins remain to be determined.

It catalyses the reaction DNA(n) + a 2'-deoxyribonucleoside 5'-triphosphate = DNA(n+1) + diphosphate. It carries out the reaction Endonucleolytic cleavage to 5'-phosphomonoester.. Its function is as follows. Early post-infection, the reverse transcriptase converts the viral RNA genome into double-stranded viral DNA. The RNase H domain of the reverse transcriptase performs two functions. It degrades the RNA template and specifically removes the RNA primer from the RNA/DNA hybrid. Following nuclear import, the integrase catalyzes the insertion of the linear, double-stranded viral DNA into the host cell chromosome. Endogenous Pol proteins may have kept, lost or modified their original function during evolution. This is Endogenous retrovirus group K member 6 Pol protein (ERVK-6) from Homo sapiens (Human).